A 231-amino-acid chain; its full sequence is NADH-ubiquinone oxidoreductase chain 4 (231 aa).

Transmembrane regions (helical) follow at residues 1–21 (PIAG…YGII), 34–54 (MFLP…LTCL), 63–85 (IAYS…TPWG), 89–111 (GMTL…NTTY), 118–138 (ILIL…WWLL), and 156–176 (LLIM…LGLS).

Belongs to the complex I subunit 4 family.

The protein resides in the mitochondrion membrane. It carries out the reaction a ubiquinone + NADH + 5 H(+)(in) = a ubiquinol + NAD(+) + 4 H(+)(out). Its function is as follows. Core subunit of the mitochondrial membrane respiratory chain NADH dehydrogenase (Complex I) that is believed to belong to the minimal assembly required for catalysis. Complex I functions in the transfer of electrons from NADH to the respiratory chain. The immediate electron acceptor for the enzyme is believed to be ubiquinone. The polypeptide is NADH-ubiquinone oxidoreductase chain 4 (MT-ND4) (Calloselasma rhodostoma (Malayan pit viper)).